An 89-amino-acid chain; its full sequence is Small ribosomal subunit protein uS14 (89 aa).

Belongs to the universal ribosomal protein uS14 family. As to quaternary structure, part of the 30S ribosomal subunit. Contacts proteins S3 and S10.

In terms of biological role, binds 16S rRNA, required for the assembly of 30S particles and may also be responsible for determining the conformation of the 16S rRNA at the A site. This chain is Small ribosomal subunit protein uS14, found in Flavobacterium johnsoniae (strain ATCC 17061 / DSM 2064 / JCM 8514 / BCRC 14874 / CCUG 350202 / NBRC 14942 / NCIMB 11054 / UW101) (Cytophaga johnsonae).